A 227-amino-acid chain; its full sequence is Cytochrome c oxidase subunit 2 (227 aa).

Residues 1–14 lie on the Mitochondrial intermembrane side of the membrane; sequence MAYPFELGFQDATS. A helical membrane pass occupies residues 15-45; sequence PIMEELLHFHDHTLMIVFLISSLVLYIISLM. The Mitochondrial matrix portion of the chain corresponds to 46 to 59; it reads LTTKLTHTSTMDAQ. Residues 60–87 traverse the membrane as a helical segment; it reads EIETIWTILPAIILILIALPSLRILYMM. Topologically, residues 88 to 227 are mitochondrial intermembrane; sequence DEINDPSLTV…HFENWSSSML (140 aa). The Cu cation site is built by His161, Cys196, Glu198, Cys200, His204, and Met207. A Mg(2+)-binding site is contributed by Glu198.

It belongs to the cytochrome c oxidase subunit 2 family. In terms of assembly, component of the cytochrome c oxidase (complex IV, CIV), a multisubunit enzyme composed of 14 subunits. The complex is composed of a catalytic core of 3 subunits MT-CO1, MT-CO2 and MT-CO3, encoded in the mitochondrial DNA, and 11 supernumerary subunits COX4I, COX5A, COX5B, COX6A, COX6B, COX6C, COX7A, COX7B, COX7C, COX8 and NDUFA4, which are encoded in the nuclear genome. The complex exists as a monomer or a dimer and forms supercomplexes (SCs) in the inner mitochondrial membrane with NADH-ubiquinone oxidoreductase (complex I, CI) and ubiquinol-cytochrome c oxidoreductase (cytochrome b-c1 complex, complex III, CIII), resulting in different assemblies (supercomplex SCI(1)III(2)IV(1) and megacomplex MCI(2)III(2)IV(2)). Found in a complex with TMEM177, COA6, COX18, COX20, SCO1 and SCO2. Interacts with TMEM177 in a COX20-dependent manner. Interacts with COX20. Interacts with COX16. Cu cation is required as a cofactor.

The protein resides in the mitochondrion inner membrane. It carries out the reaction 4 Fe(II)-[cytochrome c] + O2 + 8 H(+)(in) = 4 Fe(III)-[cytochrome c] + 2 H2O + 4 H(+)(out). Functionally, component of the cytochrome c oxidase, the last enzyme in the mitochondrial electron transport chain which drives oxidative phosphorylation. The respiratory chain contains 3 multisubunit complexes succinate dehydrogenase (complex II, CII), ubiquinol-cytochrome c oxidoreductase (cytochrome b-c1 complex, complex III, CIII) and cytochrome c oxidase (complex IV, CIV), that cooperate to transfer electrons derived from NADH and succinate to molecular oxygen, creating an electrochemical gradient over the inner membrane that drives transmembrane transport and the ATP synthase. Cytochrome c oxidase is the component of the respiratory chain that catalyzes the reduction of oxygen to water. Electrons originating from reduced cytochrome c in the intermembrane space (IMS) are transferred via the dinuclear copper A center (CU(A)) of subunit 2 and heme A of subunit 1 to the active site in subunit 1, a binuclear center (BNC) formed by heme A3 and copper B (CU(B)). The BNC reduces molecular oxygen to 2 water molecules using 4 electrons from cytochrome c in the IMS and 4 protons from the mitochondrial matrix. In Tamias townsendii (Townsend's chipmunk), this protein is Cytochrome c oxidase subunit 2 (MT-CO2).